The following is a 152-amino-acid chain: Probable flagellum biosynthesis repressor protein FlbT (152 aa).

Belongs to the FlbT family.

Has a post-transcriptional repressor function in flagellum biogenesis. Associates with the 5'-UTR of fljK mRNA and promotes its degradation. This Brucella anthropi (strain ATCC 49188 / DSM 6882 / CCUG 24695 / JCM 21032 / LMG 3331 / NBRC 15819 / NCTC 12168 / Alc 37) (Ochrobactrum anthropi) protein is Probable flagellum biosynthesis repressor protein FlbT.